The chain runs to 290 residues: Membrane protein insertase YidC 1 (290 aa).

An N-terminal signal peptide occupies residues 1–19 (MKKKALLPLFLGIMIFLAG). A lipid anchor (N-palmitoyl cysteine) is attached at Cys-20. Cys-20 carries the S-diacylglycerol cysteine lipid modification. The next 5 helical transmembrane spans lie at 56-76 (FGLAIIVLVLFIRLILLPFML), 134-154 (MLGCLPILIQMPIIMGLYFVL), 176-196 (PDIWITVIAGVLYFIQAVVSS), 211-231 (MVISPIMIIWISLQASSALGL), and 232-252 (YWSVSALFLVIQTHFANIYYS). The segment at 270–290 (HNPYSKKKGKNTQVVSKKNKK) is disordered. The span at 280–290 (NTQVVSKKNKK) shows a compositional bias: polar residues.

Belongs to the OXA1/ALB3/YidC family. Type 2 subfamily.

It is found in the cell membrane. Functionally, required for the insertion and/or proper folding and/or complex formation of integral membrane proteins into the membrane. Involved in integration of membrane proteins that insert both dependently and independently of the Sec translocase complex, as well as at least some lipoproteins. The polypeptide is Membrane protein insertase YidC 1 (Staphylococcus epidermidis (strain ATCC 12228 / FDA PCI 1200)).